Here is a 343-residue protein sequence, read N- to C-terminus: Versiconal hemiacetal acetate reductase (343 aa).

Catalysis depends on Tyr-59, which acts as the Proton donor. Substrate is bound at residue His-144. 229 to 239 (SPVARGALARP) serves as a coordination point for NADP(+).

Belongs to the aldo/keto reductase family. Aldo/keto reductase 2 subfamily.

The enzyme catalyses (2S)-versicolorone + NADP(+) = 1'-hydroxyversicolorone + NADPH + H(+). It carries out the reaction (3S)-versiconol acetate + NADP(+) = (2S,3S)-versiconal hemiacetal acetate + NADPH + H(+). The catalysed reaction is (S)-versiconol + NADP(+) = (2S-3S)-versiconal hemiacetal + NADPH + H(+). Functionally, catalyzes 3 reactions: from hydroxyversicolorone (HVN) to versicolorone (VONE), from versiconal hemiacetal acetate (VHA) to versiconol acetate (VOAc) and from versiconal (VHOH) to versiconol (VOH). Probably not an aflatoxin biosynthesis gene: may be involved in the vertical branching steps connecting the main pathway from HVN to VHOH with the side pathway from VONE to VOH. In Aspergillus parasiticus, this protein is Versiconal hemiacetal acetate reductase (vrdA).